Consider the following 351-residue polypeptide: Photosystem II D2 protein (351 aa).

The helical transmembrane segment at 39-59 threads the bilayer; sequence TAYLAIGGWLTGTTFVTSWYT. His116 contributes to the chlorophyll a binding site. Residues 123–139 form a helical membrane-spanning segment; the sequence is GFMLRQFEIARLVGIRP. 2 residues coordinate pheophytin a: Gln128 and Asn141. The chain crosses the membrane as a helical span at residues 151-164; it reads VFVSVFLMYPLGQS. Residue His196 coordinates chlorophyll a. The helical transmembrane segment at 206-226 threads the bilayer; it reads GALLCAIHGATVENTLFEDGE. His213 and Phe260 together coordinate a plastoquinone. His213 provides a ligand contact to Fe cation. His267 provides a ligand contact to Fe cation. Residues 277-293 traverse the membrane as a helical segment; that stretch reads GLWTSSIGIIGLALNLR.

Belongs to the reaction center PufL/M/PsbA/D family. PSII is composed of 1 copy each of membrane proteins PsbA, PsbB, PsbC, PsbD, PsbE, PsbF, PsbH, PsbI, PsbJ, PsbK, PsbL, PsbM, PsbT, PsbX, PsbY, PsbZ, Psb30/Ycf12, peripheral proteins PsbO, CyanoQ (PsbQ), PsbU, PsbV and a large number of cofactors. It forms dimeric complexes. The D1/D2 heterodimer binds P680, chlorophylls that are the primary electron donor of PSII, and subsequent electron acceptors. It shares a non-heme iron and each subunit binds pheophytin, quinone, additional chlorophylls, carotenoids and lipids. There is also a Cl(-1) ion associated with D1 and D2, which is required for oxygen evolution. The PSII complex binds additional chlorophylls, carotenoids and specific lipids. is required as a cofactor.

The protein resides in the cellular thylakoid membrane. The catalysed reaction is 2 a plastoquinone + 4 hnu + 2 H2O = 2 a plastoquinol + O2. Its function is as follows. Photosystem II (PSII) is a light-driven water:plastoquinone oxidoreductase that uses light energy to abstract electrons from H(2)O, generating O(2) and a proton gradient subsequently used for ATP formation. It consists of a core antenna complex that captures photons, and an electron transfer chain that converts photonic excitation into a charge separation. The D1/D2 (PsbA/PsbD) reaction center heterodimer binds P680, the primary electron donor of PSII as well as several subsequent electron acceptors. D2 is needed for assembly of a stable PSII complex. The protein is Photosystem II D2 protein of Parasynechococcus marenigrum (strain WH8102).